The following is a 265-amino-acid chain: Tryptophan synthase alpha chain (265 aa).

Residues Glu48 and Asp59 each act as proton acceptor in the active site.

It belongs to the TrpA family. As to quaternary structure, tetramer of two alpha and two beta chains.

The catalysed reaction is (1S,2R)-1-C-(indol-3-yl)glycerol 3-phosphate + L-serine = D-glyceraldehyde 3-phosphate + L-tryptophan + H2O. Its pathway is amino-acid biosynthesis; L-tryptophan biosynthesis; L-tryptophan from chorismate: step 5/5. Functionally, the alpha subunit is responsible for the aldol cleavage of indoleglycerol phosphate to indole and glyceraldehyde 3-phosphate. The chain is Tryptophan synthase alpha chain from Vesicomyosocius okutanii subsp. Calyptogena okutanii (strain HA).